A 244-amino-acid polypeptide reads, in one-letter code: Membrane-spanning 4-domains subfamily A member 6B (244 aa).

At 1-46 the chain is on the cytoplasmic side; the sequence is MIPQVVTSETVAMISPNGMSLPQTDKPQPFHQWQDSLKKHLKAEIK. The helical transmembrane segment at 47–67 threads the bilayer; it reads VMAAIQIMCAVMVLSLGIILA. Over 68 to 84 the chain is Extracellular; it reads SVPSNLHFTSVFSVLLK. Residues 85-105 traverse the membrane as a helical segment; the sequence is SGYPFIGALFFIVSGILSIVT. The Cytoplasmic portion of the chain corresponds to 106-121; sequence ETKSTKILVDSSLTLN. The chain crosses the membrane as a helical span at residues 122 to 142; that stretch reads ILSVSFAFMGIIIISVSLAGL. The Extracellular segment spans residues 143–176; that stretch reads HPASEQCLQSKELRPTEYHYYQFLDRNECFAAKS. Residues 177–197 traverse the membrane as a helical segment; sequence VLAGVFSLMLISTMLELGLAV. The Cytoplasmic segment spans residues 198 to 244; the sequence is LTAMLWWKQSHSNIPGNVMFLPHSSNNDSNMESKVLCNPSYEEQLVC.

This sequence belongs to the MS4A family. In terms of tissue distribution, expressed at high levels in thymus, spleen, and peripheral lymph nodes, with less abundant levels in non-lymphoid tissues.

The protein localises to the membrane. Its function is as follows. May be involved in signal transduction as a component of a multimeric receptor complex. This is Membrane-spanning 4-domains subfamily A member 6B (Ms4a6b) from Mus musculus (Mouse).